We begin with the raw amino-acid sequence, 312 residues long: Very-long-chain 3-oxoacyl-CoA reductase (312 aa).

The chain crosses the membrane as a helical span at residues 4-24; the sequence is ALPAAGFLYWVGAGTVAYLAL. 50–79 provides a ligand contact to NADP(+); the sequence is GEWAVVTGGTDGIGKSYAEELAKRGMKVVL. A run of 2 helical transmembrane segments spans residues 182–202 and 271–291; these read GAILNISSGSGMFPVPLLTIY and GYLIHVLMGWIISNLPSWIYL. Ser189 serves as a coordination point for substrate. Residue Tyr202 is the Proton acceptor of the active site. The Di-lysine motif signature appears at 308–312; that stretch reads KIKKN.

Belongs to the short-chain dehydrogenases/reductases (SDR) family. 17-beta-HSD 3 subfamily.

It localises to the endoplasmic reticulum membrane. The enzyme catalyses a very-long-chain (3R)-3-hydroxyacyl-CoA + NADP(+) = a very-long-chain 3-oxoacyl-CoA + NADPH + H(+). It catalyses the reaction 17beta-estradiol + NAD(+) = estrone + NADH + H(+). The catalysed reaction is 17beta-estradiol + NADP(+) = estrone + NADPH + H(+). It carries out the reaction 3-oxooctadecanoyl-CoA + NADPH + H(+) = (3R)-hydroxyoctadecanoyl-CoA + NADP(+). The enzyme catalyses (7Z,10Z,13Z,16Z)-3-oxodocosatetraenoyl-CoA + NADPH + H(+) = (3R)-hydroxy-(7Z,10Z,13Z,16Z)-docosatetraenoyl-CoA + NADP(+). It catalyses the reaction 3-oxo-(7Z,10Z,13Z,16Z,19Z)-docosapentaenoyl-CoA + NADPH + H(+) = (3R)-hydroxy-(7Z,10Z,13Z,16Z,19Z)-docosapentaenoyl-CoA + NADP(+). The catalysed reaction is (8Z,11Z,14Z)-3-oxoeicosatrienoyl-CoA + NADPH + H(+) = (3R)-hydroxy-(8Z,11Z,14Z)-eicosatrienoyl-CoA + NADP(+). The protein operates within lipid metabolism; fatty acid biosynthesis. It functions in the pathway steroid biosynthesis; estrogen biosynthesis. In terms of biological role, catalyzes the second of the four reactions of the long-chain fatty acids elongation cycle. This endoplasmic reticulum-bound enzymatic process, allows the addition of two carbons to the chain of long- and very long-chain fatty acids/VLCFAs per cycle. This enzyme has a 3-ketoacyl-CoA reductase activity, reducing 3-ketoacyl-CoA to 3-hydroxyacyl-CoA, within each cycle of fatty acid elongation. Thereby, it may participate in the production of VLCFAs of different chain lengths that are involved in multiple biological processes as precursors of membrane lipids and lipid mediators. May also catalyze the transformation of estrone (E1) into estradiol (E2) and play a role in estrogen formation. This Macaca fascicularis (Crab-eating macaque) protein is Very-long-chain 3-oxoacyl-CoA reductase (HSD17B12).